A 430-amino-acid chain; its full sequence is Histidinol dehydrogenase (430 aa).

NAD(+) is bound by residues Tyr-130, Gln-191, and Asn-214. Residues Ser-237, Gln-259, and His-262 each contribute to the substrate site. Zn(2+)-binding residues include Gln-259 and His-262. Catalysis depends on proton acceptor residues Glu-327 and His-328. Residues His-328, Asp-361, Glu-415, and His-420 each contribute to the substrate site. Asp-361 is a binding site for Zn(2+). Residue His-420 coordinates Zn(2+).

Belongs to the histidinol dehydrogenase family. Requires Zn(2+) as cofactor.

It catalyses the reaction L-histidinol + 2 NAD(+) + H2O = L-histidine + 2 NADH + 3 H(+). It functions in the pathway amino-acid biosynthesis; L-histidine biosynthesis; L-histidine from 5-phospho-alpha-D-ribose 1-diphosphate: step 9/9. Catalyzes the sequential NAD-dependent oxidations of L-histidinol to L-histidinaldehyde and then to L-histidine. The polypeptide is Histidinol dehydrogenase (Brucella suis biovar 1 (strain 1330)).